The following is a 750-amino-acid chain: Photosystem I P700 chlorophyll a apoprotein A1 (750 aa).

8 helical membrane passes run 70-93 (VFSA…FHGA), 156-179 (LYCT…FHYH), 195-219 (LNHH…HVSL), 291-309 (IAHH…GHMY), 346-369 (WHAQ…HHMY), 385-411 (LSLF…IFMV), 433-455 (AIIS…LYIH), and 531-549 (FLVH…LILL). [4Fe-4S] cluster contacts are provided by C573 and C582. The next 2 helical transmembrane spans lie at 589-610 (HVFL…HFSW) and 664-686 (LSAY…MFLF). H675 contacts chlorophyll a'. Chlorophyll a is bound by residues M683 and Y691. Residue W692 coordinates phylloquinone. A helical transmembrane segment spans residues 724 to 744 (AVGVTHYLLGGIATTWAFFLA).

It belongs to the PsaA/PsaB family. As to quaternary structure, the PsaA/B heterodimer binds the P700 chlorophyll special pair and subsequent electron acceptors. PSI consists of a core antenna complex that captures photons, and an electron transfer chain that converts photonic excitation into a charge separation. The eukaryotic PSI reaction center is composed of at least 11 subunits. P700 is a chlorophyll a/chlorophyll a' dimer, A0 is one or more chlorophyll a, A1 is one or both phylloquinones and FX is a shared 4Fe-4S iron-sulfur center. serves as cofactor.

The protein localises to the plastid. Its subcellular location is the chloroplast thylakoid membrane. The catalysed reaction is reduced [plastocyanin] + hnu + oxidized [2Fe-2S]-[ferredoxin] = oxidized [plastocyanin] + reduced [2Fe-2S]-[ferredoxin]. PsaA and PsaB bind P700, the primary electron donor of photosystem I (PSI), as well as the electron acceptors A0, A1 and FX. PSI is a plastocyanin-ferredoxin oxidoreductase, converting photonic excitation into a charge separation, which transfers an electron from the donor P700 chlorophyll pair to the spectroscopically characterized acceptors A0, A1, FX, FA and FB in turn. Oxidized P700 is reduced on the lumenal side of the thylakoid membrane by plastocyanin. This chain is Photosystem I P700 chlorophyll a apoprotein A1, found in Coffea arabica (Arabian coffee).